Here is a 111-residue protein sequence, read N- to C-terminus: Universal stress protein B (111 aa).

2 consecutive transmembrane segments (helical) span residues 1 to 21 (MIST…NMAR) and 90 to 110 (FLLT…MMMW).

This sequence belongs to the universal stress protein B family.

The protein resides in the cell inner membrane. The polypeptide is Universal stress protein B (Pectobacterium atrosepticum (strain SCRI 1043 / ATCC BAA-672) (Erwinia carotovora subsp. atroseptica)).